Consider the following 105-residue polypeptide: MNARDKKFMTAGIIIALIIAVLAPFLASPNPDGLESTAEKVMPNPETEPVLESPLPDYTLPALGDSPFGGVVSMVIGTILVLAIAYGVGAVFRGRKAAGEEGGEE.

A helical membrane pass occupies residues 8–28 (FMTAGIIIALIIAVLAPFLAS). The segment at 32–53 (DGLESTAEKVMPNPETEPVLES) is disordered. The chain crosses the membrane as a helical span at residues 72 to 92 (VSMVIGTILVLAIAYGVGAVF).

The protein to M.jannaschii MJ1570.

Its subcellular location is the cell membrane. This is an uncharacterized protein from Methanothermobacter thermautotrophicus (strain ATCC 29096 / DSM 1053 / JCM 10044 / NBRC 100330 / Delta H) (Methanobacterium thermoautotrophicum).